The sequence spans 464 residues: Protein FAM90A16 (464 aa).

Disordered stretches follow at residues 1–42 (MMAR…DPRL), 70–389 (PATL…HDGA), and 415–437 (HSPE…SEAP). Composition is skewed to basic and acidic residues over residues 74–89 (GKKE…KPRV) and 97–114 (NKDK…DPQR). Over residues 180–197 (LASLSPLRKASLSSSSSL) the composition is skewed to low complexity.

Belongs to the FAM90 family.

The polypeptide is Protein FAM90A16 (Homo sapiens (Human)).